Reading from the N-terminus, the 285-residue chain is Secreted RxLR effector protein 106 (285 aa).

A signal peptide spans 1–24 (MSVRYAGLLLAAVAVSAHINEVNS). The RxLR-dEER signature appears at 42–54 (RDLRSADNGNEER). 2 N-linked (GlcNAc...) asparagine glycosylation sites follow: asparagine 182 and asparagine 187. Positions 220-229 (IEGDKEKKGG) are enriched in basic and acidic residues. The interval 220 to 262 (IEGDKEKKGGPDYVEGTESRGKKRGQTEAPDLEPGLTPKQKRL) is disordered. Positions 239-264 (RGKKRGQTEAPDLEPGLTPKQKRLKR) match the Bipartite nuclear localization signal motif.

This sequence belongs to the RxLR effector family. In terms of assembly, interacts with host RCD1 and SRO1 transcription co-regulators.

Its subcellular location is the secreted. It is found in the host nucleus. In terms of biological role, secreted effector that suppresses pathogen-associated molecular pattern (PAMP)-triggered immunity (PTI) in host plants. Binds to RCD1 and SRO1 transcription co-regulators to attenuate transcriptional activation of salicylic acid (SA)-induced defense genes and alters plant growth responses to light. Suppresses SA signal transduction but not SA levels. The sequence is that of Secreted RxLR effector protein 106 from Hyaloperonospora arabidopsidis (strain Emoy2) (Downy mildew agent).